A 539-amino-acid polypeptide reads, in one-letter code: Nucleobase-ascorbate transporter 8 (539 aa).

The segment at 1 to 20 (MAGDGVENAKPPQKQEDLQP) is disordered. 12 helical membrane passes run 44–64 (ILLG…IPTM), 79–99 (LIQT…FFGT), 101–121 (LPAV…IVLA), 141–161 (IQGA…SGLW), 167–187 (FLSP…LYEQ), 189–209 (FPML…LVIF), 229–249 (FAVI…TIGG), 295–315 (IFAM…TYIA), 368–388 (VGSR…SILG), 399–421 (APIV…LSLI), 433–453 (FILG…YQYT), and 470–490 (NIIN…AFFL).

This sequence belongs to the nucleobase:cation symporter-2 (NCS2) (TC 2.A.40) family. Highly expressed in ovules, endosperm and embryo.

Its subcellular location is the cell membrane. In Arabidopsis thaliana (Mouse-ear cress), this protein is Nucleobase-ascorbate transporter 8 (NAT8).